Reading from the N-terminus, the 802-residue chain is Pyrophosphate-energized membrane proton pump 2 (802 aa).

6 helical membrane-spanning segments follow: residues 45–65, 66–86, 118–138, 160–180, 206–226, and 246–266; these read VLSIILLFCFGAIFYMGASTS, PIIVFVFTVCIISFLLSIYLT, YSTISKMAILLAFVILCIYLF, VAAFLLGALCSGIAGYVGMWV, AGGFSALVVVGMAVIGIAILY, and LPLLLVGYGFGASFVALFAQL. Lysine 273 contributes to the substrate binding site. The Mg(2+) site is built by aspartate 276, aspartate 280, and aspartate 306. 5 helical membrane-spanning segments follow: residues 348 to 368, 386 to 406, 421 to 441, 468 to 488, and 511 to 531; these read FILFPLVVHSFDLIISSIGIL, MAVLQKGYSLTIILAVITFGA, WFNFALCGLVGIITAYIFVWI, IIAGVSLGLESTALPVLTISV, and GGLFGTAVATMGMLSTAAYVL. Positions 541 and 568 each coordinate Mg(2+). The next 4 membrane-spanning stretches (helical) occupy residues 577–597, 615–635, 686–706, and 716–736; these read FAIGSAALASFLLFSAYMDEV, VFVGGLLGAMLIFLFSAWACA, GALAIASPIVVGLVFRILGYY, and VVASMLMFATVCGILMALFLN. Positions 743 and 773 each coordinate Mg(2+). Lysine 776 lines the substrate pocket. The helical transmembrane segment at 782-802 threads the bilayer; sequence SIHVLIKMLATITLVMAPVFL.

This sequence belongs to the H(+)-translocating pyrophosphatase (TC 3.A.10) family. K(+)-insensitive subfamily. Monomer. In terms of tissue distribution, ubiquitous. Mostly expressed in cotyledons, roots and flowers. Especially high levels in trichomes, sepals and stamen filaments.

Its subcellular location is the golgi apparatus membrane. It carries out the reaction diphosphate + H2O + H(+)(in) = 2 phosphate + 2 H(+)(out). Activated by Mg(+) but not by K(+). Inhibited by Ca(2+). In terms of biological role, pyrophosphatase active in both inorganic pyrophosphate hydrolysis and H(+) translocation. This is Pyrophosphate-energized membrane proton pump 2 (AVPL1) from Arabidopsis thaliana (Mouse-ear cress).